The chain runs to 37 residues: Large ribosomal subunit protein bL36 (37 aa).

The protein belongs to the bacterial ribosomal protein bL36 family.

In Sulfurimonas denitrificans (strain ATCC 33889 / DSM 1251) (Thiomicrospira denitrificans (strain ATCC 33889 / DSM 1251)), this protein is Large ribosomal subunit protein bL36.